The chain runs to 203 residues: MNPEYDYLFKLLLIGDSGVGKSCLLLRFADDTYTESYISTIGVDFKIRTVELDGKVIKLQIWDTAGQERFRTITSSYYRGAHGIIVVYDVTDQESFNNVKQWLAEIDRYASENVNKLLVGNKSDLTGKKVVDYQAAKAFADEIGIPFLETSAKNATNVEQAFMTMAAEIKNRMASQPVPPKPGGPVVRPTEGKPINNKSSSCC.

GTP contacts are provided by residues 15–23 (GDSGVGKSC), 33–40 (YTESYIST), 63–67 (DTAGQ), 121–124 (NKSD), and 151–153 (SAK). An Effector region motif is present at residues 37–45 (YISTIGVDF). The tract at residues 173-203 (MASQPVPPKPGGPVVRPTEGKPINNKSSSCC) is disordered. Residues cysteine 202 and cysteine 203 are each lipidated (S-geranylgeranyl cysteine).

The protein belongs to the small GTPase superfamily. Rab family.

The protein localises to the cell membrane. In terms of biological role, protein transport. Probably involved in vesicular traffic. This Volvox carteri (Green alga) protein is GTP-binding protein yptV1 (YPTV1).